A 297-amino-acid chain; its full sequence is Coiled-coil domain-containing protein 159 (297 aa).

The stretch at 147–297 (EELELVREEV…SKSGRSFPPA (151 aa)) forms a coiled coil. A disordered region spans residues 256 to 297 (LRGHKGHQCLSPPLPSWDSDSDCDQDLSQPPFSKSGRSFPPA).

As to quaternary structure, interacts with DYNLT2. Interacts with GGNBP1. Interacts with OSBP2.

Functionally, functions during spermatid development; may participate in the centrosome reduction procedure of spermatids and is required for the formation of the connecting piece/sperm head-tail coupling apparatus (HTCA) and the correct and tight attachment of the flagellum to the nuclear envelope. The polypeptide is Coiled-coil domain-containing protein 159 (CCDC159) (Homo sapiens (Human)).